Here is an 838-residue protein sequence, read N- to C-terminus: AP-4 complex subunit beta (838 aa).

The tract at residues 582 to 673 is hinge; the sequence is NSSKQTTSIN…NQNNNQNNNQ (92 aa). Residues 648 to 683 form a disordered region; sequence ITDGNQNNNQNNNQNNNQNNNQNNNQNNQNNNNQNN. Over residues 652–683 the composition is skewed to low complexity; that stretch reads NQNNNQNNNQNNNQNNNQNNNQNNQNNNNQNN. The ear stretch occupies residues 674 to 838; it reads NNQNNNNQNN…LSIPIPKIFN (165 aa).

It belongs to the adaptor complexes large subunit family. As to quaternary structure, may be part of the adaptor protein complex 4 (AP-4), a heterotetramer composed of two large adaptins (epsilon-type subunitand beta-type subunit), a medium adaptin (mu-type subunit) and a small adaptin (sigma-type).

Its subcellular location is the golgi apparatus. The protein resides in the trans-Golgi network membrane. Probable component of an adaptor protein complex. Adaptor protein complexes are vesicle coat components involved both in vesicle formation and cargo selection. They control the vesicular transport of proteins in different trafficking pathways. The polypeptide is AP-4 complex subunit beta (ap4b1) (Dictyostelium discoideum (Social amoeba)).